We begin with the raw amino-acid sequence, 359 residues long: MTNIEVKTRVKQYQIKIMINSLHHLGTLVTKVWCARQVAVVTDTNVGPYYAKLVTDELTAAGFKVRVMTVPAGEESKSWSQVQSLIDQLSAAHFSRSDGVLALGGGVVGDLAGFVASIYMRGIALIQVPTSLLAQVDSSVGGKTAIDLPTGKNLVGSFYQPDLVVIDPAILVTLPPRMLAEGYGEIVKCAALVGGDFWQSLHQITSVAAILPAAPDLIAASVAFKARVVMADEHEQGQRQLLNFGHTIGHAVELLADGQLMHGEAVAIGLVQVCRLFAAHGLAPTSLTSTLKARLMAVGLPTELPPIAPQAVAAVMQHDKKVHGTALTWVYLSAVGQPHLYPIAVTDLATWMGDLWSVS.

NAD(+) contacts are provided by residues 106–110, 130–131, Lys-143, and Lys-152; these read GVVGD and TS. Zn(2+)-binding residues include Glu-185, His-246, and His-262.

The protein belongs to the sugar phosphate cyclases superfamily. Dehydroquinate synthase family. NAD(+) is required as a cofactor. It depends on Co(2+) as a cofactor. The cofactor is Zn(2+).

The protein localises to the cytoplasm. It carries out the reaction 7-phospho-2-dehydro-3-deoxy-D-arabino-heptonate = 3-dehydroquinate + phosphate. It functions in the pathway metabolic intermediate biosynthesis; chorismate biosynthesis; chorismate from D-erythrose 4-phosphate and phosphoenolpyruvate: step 2/7. In terms of biological role, catalyzes the conversion of 3-deoxy-D-arabino-heptulosonate 7-phosphate (DAHP) to dehydroquinate (DHQ). The sequence is that of 3-dehydroquinate synthase from Lactiplantibacillus plantarum (strain ATCC BAA-793 / NCIMB 8826 / WCFS1) (Lactobacillus plantarum).